The following is a 381-amino-acid chain: 1-deoxy-D-xylulose 5-phosphate reductoisomerase (381 aa).

Residues Thr10, Gly11, Ser12, Ile13, and Asn120 each contribute to the NADPH site. A 1-deoxy-D-xylulose 5-phosphate-binding site is contributed by Lys121. Residue Glu122 participates in NADPH binding. Asp146 contributes to the Mn(2+) binding site. Residues Ser147, Glu148, Ser172, and His195 each coordinate 1-deoxy-D-xylulose 5-phosphate. Position 148 (Glu148) interacts with Mn(2+). An NADPH-binding site is contributed by Gly201. 1-deoxy-D-xylulose 5-phosphate-binding residues include Ser208, Asn213, Lys214, and Glu217. Glu217 is a Mn(2+) binding site.

The protein belongs to the DXR family. Mg(2+) serves as cofactor. It depends on Mn(2+) as a cofactor.

It catalyses the reaction 2-C-methyl-D-erythritol 4-phosphate + NADP(+) = 1-deoxy-D-xylulose 5-phosphate + NADPH + H(+). It functions in the pathway isoprenoid biosynthesis; isopentenyl diphosphate biosynthesis via DXP pathway; isopentenyl diphosphate from 1-deoxy-D-xylulose 5-phosphate: step 1/6. Functionally, catalyzes the NADPH-dependent rearrangement and reduction of 1-deoxy-D-xylulose-5-phosphate (DXP) to 2-C-methyl-D-erythritol 4-phosphate (MEP). This is 1-deoxy-D-xylulose 5-phosphate reductoisomerase from Thermodesulfovibrio yellowstonii (strain ATCC 51303 / DSM 11347 / YP87).